Here is a 558-residue protein sequence, read N- to C-terminus: SPATS2-like protein (558 aa).

Position 2 is an N-acetylalanine (Ala-2). A compositionally biased stretch (basic residues) spans 63-79 (GKKKNNKRKRSKSKQHQ). Disordered stretches follow at residues 63–148 (GKKK…RGIT) and 161–202 (DGNP…SNAP). 2 stretches are compositionally biased toward basic and acidic residues: residues 80 to 92 (GNKD…ERPE) and 110 to 142 (GCEK…EPPR). Ser-120 is modified (phosphoserine). Residues 279 to 344 (KEEAMDILTA…ARFSCDIEQL (66 aa)) are a coiled coil. The interval 383-514 (KQGNFSRKSS…SEKARRRQHA (132 aa)) is disordered. Polar residues predominate over residues 416-433 (DACQQTMPTNKQQNGPSN). Ser-455 bears the Phosphoserine mark. Over residues 469–485 (HEHRRQPHNGFRPKNKG) the composition is skewed to basic residues.

This sequence belongs to the SPATS2 family.

The protein resides in the cytoplasm. It localises to the nucleus. It is found in the nucleolus. In Rattus norvegicus (Rat), this protein is SPATS2-like protein (Spats2l).